Reading from the N-terminus, the 401-residue chain is Acetate kinase (401 aa).

Mg(2+) is bound at residue asparagine 9. An ATP-binding site is contributed by lysine 16. Arginine 88 lines the substrate pocket. Aspartate 147 functions as the Proton donor/acceptor in the catalytic mechanism. ATP is bound by residues 207 to 211 (HLGNG), 282 to 284 (DCR), and 333 to 337 (GIGEN). A Mg(2+)-binding site is contributed by glutamate 388.

The protein belongs to the acetokinase family. In terms of assembly, homodimer. Requires Mg(2+) as cofactor. It depends on Mn(2+) as a cofactor.

Its subcellular location is the cytoplasm. The enzyme catalyses acetate + ATP = acetyl phosphate + ADP. The protein operates within metabolic intermediate biosynthesis; acetyl-CoA biosynthesis; acetyl-CoA from acetate: step 1/2. Its function is as follows. Catalyzes the formation of acetyl phosphate from acetate and ATP. Can also catalyze the reverse reaction. The chain is Acetate kinase from Haemophilus influenzae (strain PittEE).